Consider the following 322-residue polypeptide: Helix-loop-helix 34 (322 aa).

The span at 1–11 (METNLSEEKQK) shows a compositional bias: basic and acidic residues. A disordered region spans residues 1–23 (METNLSEEKQKPSKSQAQQRRQM). One can recognise a bHLH domain in the interval 8–62 (EKQKPSKSQAQQRRQMENYEFSQLANELPLARAISGQHIDKTTMVRLATAYIKLH). 2 consecutive PAS domains span residues 82 to 152 (DSLW…DLNW) and 203 to 276 (PTPV…FNLG).

In terms of assembly, efficient DNA binding requires dimerization with another bHLH protein. In terms of tissue distribution, expressed in a small subset of neurons, probably AVJL and AVJR. Expressed in the AVH neurons.

The protein localises to the nucleus. Transcription factor. Involved in specifying AVH neuron identity, acting in concert with unc-42. Involved in serotonin-mediated feeding behavior, probably acting by modulating expression of genes involved in glutamate signaling. This chain is Helix-loop-helix 34 (hlh-34), found in Caenorhabditis elegans.